The chain runs to 343 residues: Pseudaminic acid synthase (343 aa).

One can recognise an AFP-like domain in the interval 287 to 343 (SLYASKDIKKGEIFSEENVKSVRPSFGLHPKFYQELLGKKASKDIEFGDALKESDFR).

It belongs to the pseudaminic acid synthase family. A divalent metal cation is required as a cofactor.

It carries out the reaction 2,4-diacetamido-2,4,6-trideoxy-beta-L-altrose + phosphoenolpyruvate + H2O = pseudaminate + phosphate. In terms of biological role, catalyzes the fifth step in the biosynthesis of pseudaminic acid, a sialic-acid-like sugar that is used to modify flagellin. Catalyzes the condensation of phosphoenolpyruvate with 2,4-diacetamido-2,4,6-trideoxy-beta-l-altropyranose, forming pseudaminic acid. This is Pseudaminic acid synthase (pseI) from Campylobacter jejuni subsp. jejuni serotype O:23/36 (strain 81-176).